A 404-amino-acid polypeptide reads, in one-letter code: Serine/threonine-protein phosphatase 2A regulatory subunit rsa-1 (404 aa).

In terms of assembly, part of a complex consisting of a common heterodimeric core enzyme, composed of catalytic subunit let-92 and constant regulatory subunit paa-1, that associates with a variety of regulatory subunits which confer distinct properties to the holoenzyme. Interacts with rsa-2, spd-5 and tpxl-1.

Its subcellular location is the cytoplasm. It is found in the cytoskeleton. It localises to the microtubule organizing center. The protein resides in the centrosome. In terms of biological role, regulatory subunit of phosphatase let-92 which recruits let-92/paa-1 complex to the centrosomes, thereby regulating microtubule outgrowth from centrosomes and mitotic spindle assembly ensuring the stability of kinetochore microtubules. This Caenorhabditis elegans protein is Serine/threonine-protein phosphatase 2A regulatory subunit rsa-1.